A 360-amino-acid chain; its full sequence is Isocitrate dehydrogenase [NAD] regulatory subunit B, mitochondrial (360 aa).

Residues 1 to 113 (MLGRLRTVVK…MELRKALDLY (113 aa)) constitute a mitochondrion transit peptide. Positions 101, 103, 107, and 140 each coordinate substrate. Mg(2+) is bound at residue aspartate 227. NADP(+) contacts are provided by residues 284-290 (HHVAADI) and asparagine 297.

The protein belongs to the isocitrate and isopropylmalate dehydrogenases family. In terms of assembly, heterooligomer of catalytic and regulatory subunits. Mg(2+) serves as cofactor. The cofactor is Mn(2+).

Its subcellular location is the mitochondrion. The catalysed reaction is D-threo-isocitrate + NAD(+) = 2-oxoglutarate + CO2 + NADH. Performs an essential role in the oxidative function of the citric acid cycle. This is Isocitrate dehydrogenase [NAD] regulatory subunit B, mitochondrial (idhB) from Dictyostelium discoideum (Social amoeba).